Reading from the N-terminus, the 359-residue chain is Alanine racemase, biosynthetic (359 aa).

K34 functions as the Proton acceptor; specific for D-alanine in the catalytic mechanism. Position 34 is an N6-(pyridoxal phosphate)lysine (K34). Residue R129 coordinates substrate. The active-site Proton acceptor; specific for L-alanine is Y255. Residue M303 participates in substrate binding.

The protein belongs to the alanine racemase family. The cofactor is pyridoxal 5'-phosphate.

The enzyme catalyses L-alanine = D-alanine. It participates in amino-acid biosynthesis; D-alanine biosynthesis; D-alanine from L-alanine: step 1/1. Its pathway is cell wall biogenesis; peptidoglycan biosynthesis. In terms of biological role, catalyzes the interconversion of L-alanine and D-alanine. Provides the D-alanine required for cell wall biosynthesis. The sequence is that of Alanine racemase, biosynthetic (alr) from Escherichia coli O157:H7.